Reading from the N-terminus, the 335-residue chain is Mycobacterial beta-ketoacyl-[acyl-carrier-protein] synthase III (335 aa).

Catalysis depends on residues Cys-122 and His-258. Residues 259–263 are ACP-binding; sequence QANSR. The active site involves Asn-289.

It belongs to the thiolase-like superfamily. FabH family. Homodimer.

Its subcellular location is the cytoplasm. The enzyme catalyses malonyl-[ACP] + dodecanoyl-CoA + H(+) = 3-oxotetradecanoyl-[ACP] + CO2 + CoA. The protein operates within lipid metabolism; fatty acid biosynthesis. It participates in lipid metabolism; mycolic acid biosynthesis. Catalyzes the condensation reaction of fatty acid synthesis by the addition to an acyl acceptor of two carbons from malonyl-ACP. Catalyzes the first condensation reaction which initiates fatty acid synthesis and may therefore play a role in governing the total rate of fatty acid production. Possesses both acetoacetyl-ACP synthase and acetyl transacylase activities. Its substrate specificity determines the biosynthesis of branched-chain and/or straight-chain of fatty acids. The protein is Mycobacterial beta-ketoacyl-[acyl-carrier-protein] synthase III of Mycobacterium avium (strain 104).